We begin with the raw amino-acid sequence, 479 residues long: Cardiolipin synthase A (479 aa).

The next 2 membrane-spanning stretches (helical) occupy residues 8-28 and 38-58; these read FFGY…IHAL and IAWA…YLVF. 2 PLD phosphodiesterase domains span residues 218–245 and 392–419; these read INFR…GDEY and EPGF…DNRS. Active-site residues include His-223, Lys-225, Asp-230, His-397, Lys-399, and Asp-404.

The protein belongs to the phospholipase D family. Cardiolipin synthase subfamily. ClsA sub-subfamily.

Its subcellular location is the cell inner membrane. It carries out the reaction 2 a 1,2-diacyl-sn-glycero-3-phospho-(1'-sn-glycerol) = a cardiolipin + glycerol. Catalyzes the reversible phosphatidyl group transfer from one phosphatidylglycerol molecule to another to form cardiolipin (CL) (diphosphatidylglycerol) and glycerol. This Pseudomonas syringae pv. syringae (strain B728a) protein is Cardiolipin synthase A.